The primary structure comprises 187 residues: uncharacterized protein (187 aa).

An N-terminal signal peptide occupies residues 1-17 (MYAGGRVVRSAFARGKV). A lipid anchor (N-palmitoyl cysteine) is attached at Cys-18. Cys-18 carries the S-diacylglycerol cysteine lipid modification.

It is found in the cell membrane. This is an uncharacterized protein from Treponema pallidum (strain Nichols).